We begin with the raw amino-acid sequence, 293 residues long: uncharacterized protein (293 aa).

A helical transmembrane segment spans residues 55-77 (IVLAKEIFAVAFFSLGMSCLLMA).

The protein localises to the membrane. This is an uncharacterized protein from Caenorhabditis elegans.